Here is a 359-residue protein sequence, read N- to C-terminus: Leafy/floricaula homolog FL1 (359 aa).

Positions serine 113–glutamate 170 are disordered. Over residues glutamine 144 to threonine 155 the composition is skewed to basic residues. DNA-binding regions lie at residues arginine 179 to phenylalanine 183, asparagine 248 to tyrosine 255, and tyrosine 320 to threonine 323. The segment covering alanine 340–alanine 352 has biased composition (low complexity). Positions alanine 340 to tyrosine 359 are disordered.

The protein belongs to the FLO/LFY family. Expressed strongly in the early floral primordium and then successively in the primordia of sepals, petals, stamens and carpels. Also in the leaf primordia and young leaves.

It localises to the nucleus. Functionally, probable transcription factor. This Eucalyptus globulus (Tasmanian blue gum) protein is Leafy/floricaula homolog FL1 (LF1).